The chain runs to 204 residues: Twist-related protein 1 (204 aa).

Residues 1–18 are compositionally biased toward low complexity; that stretch reads MMQDVSSSPVSPADDSLS. The disordered stretch occupies residues 1–107; sequence MMQDVSSSPV…GGGSPQSYEE (107 aa). Basic residues predominate over residues 34 to 43; that stretch reads RGGRKRRSSR. 2 stretches are compositionally biased toward gly residues: residues 46–65 and 80–101; these read AGGGAGPGGAAGGGVGGGDE and GCGGGGSAGGGGGGGSSSGGGS. Residues 110–161 form the bHLH domain; that stretch reads TQRVMANVRERQRTQSLNEAFAALRKIIPTLPSDKLSKIQTLKLAARYIDFL. Residues 163–193 form a sufficient for transactivation activity region; the sequence is QVLQSDELDSKMASCSYVAHERFSYAFSVWR.

Efficient DNA binding requires dimerization with another bHLH protein. Homodimer or heterodimer with E proteins such as TCF3. ID1 binds preferentially to TCF3 but does not interact efficiently with TWIST1 so ID1 levels control the amount of TCF3 available to dimerize with TWIST and thus determine the type of dimer formed.

The protein localises to the nucleus. In terms of biological role, acts as a transcriptional regulator. Inhibits myogenesis by sequestrating E proteins, inhibiting trans-activation by MEF2, and inhibiting DNA-binding by MYOD1 through physical interaction. This interaction probably involves the basic domains of both proteins. Also represses expression of pro-inflammatory cytokines such as TNFA and IL1B. Regulates cranial suture patterning and fusion. Activates transcription as a heterodimer with E proteins. Regulates gene expression differentially, depending on dimer composition. Homodimers induce expression of FGFR2 and POSTN while heterodimers repress FGFR2 and POSTN expression and induce THBS1 expression. Heterodimerization is also required for osteoblast differentiation. Represses the activity of the circadian transcriptional activator: NPAS2-BMAL1 heterodimer. The chain is Twist-related protein 1 (TWIST1) from Nomascus concolor (Black crested gibbon).